Here is a 569-residue protein sequence, read N- to C-terminus: BICD family-like cargo adapter 1 (569 aa).

The segment at 1–36 (MSASCLDLISAPPQPDSDRMDRALNPGRQNSPDTAG) is disordered. The short motif at 97–101 (AAKLG) is the CC1 box element. Positions 102 to 283 (KALLERNQDL…TLELEKHCHH (182 aa)) form a coiled coil. The segment at 385–405 (ALSTDSSMDESSETLSAKDVP) is disordered. A coiled-coil region spans residues 458-520 (NEQLQSAIRD…LEAWQDDMHR (63 aa)). Residues 533–554 (EWKDPPFSFSRRGAAASRPTQR) form a disordered region.

This sequence belongs to the BICDR family. In terms of assembly, part of a tripartite complex with dynein and dynactin, acts an adapter linking the dynein motor complex and dynactin. As to expression, highly expressed in developing neural tissues and developing eye.

It localises to the cytoplasm. The protein resides in the cytoskeleton. It is found in the microtubule organizing center. The protein localises to the centrosome. Acts as an adapter protein linking the dynein motor complex to various cargos and converts dynein from a non-processive to a highly processive motor in the presence of dynactin. Facilitates the interaction between dynein and dynactin and activates dynein processivity (the ability to move along a microtubule for a long distance without falling off the track). Predominantly recruits 2 dyneins, which increases both the force and speed of the microtubule motor. Component of secretory vesicle machinery in developing neurons that acts as a regulator of neurite outgrowth. Regulates the secretory vesicle transport by controlling the accumulation of Rab6-containing secretory vesicles in the pericentrosomal region restricting anterograde secretory transport during the early phase of neuronal differentiation, thereby inhibiting neuritogenesis. The protein is BICD family-like cargo adapter 1 (bicdl1) of Danio rerio (Zebrafish).